The chain runs to 557 residues: Formate--tetrahydrofolate ligase (557 aa).

An ATP-binding site is contributed by 67-74 (TPAGEGKT).

This sequence belongs to the formate--tetrahydrofolate ligase family.

The enzyme catalyses (6S)-5,6,7,8-tetrahydrofolate + formate + ATP = (6R)-10-formyltetrahydrofolate + ADP + phosphate. The protein operates within one-carbon metabolism; tetrahydrofolate interconversion. The protein is Formate--tetrahydrofolate ligase of Cereibacter sphaeroides (strain ATCC 17029 / ATH 2.4.9) (Rhodobacter sphaeroides).